Reading from the N-terminus, the 158-residue chain is NADH-quinone oxidoreductase subunit B (158 aa).

Residues cysteine 37, cysteine 38, cysteine 102, and cysteine 132 each coordinate [4Fe-4S] cluster.

Belongs to the complex I 20 kDa subunit family. In terms of assembly, NDH-1 is composed of 14 different subunits. Subunits NuoB, C, D, E, F, and G constitute the peripheral sector of the complex. It depends on [4Fe-4S] cluster as a cofactor.

It localises to the cell inner membrane. The catalysed reaction is a quinone + NADH + 5 H(+)(in) = a quinol + NAD(+) + 4 H(+)(out). Functionally, NDH-1 shuttles electrons from NADH, via FMN and iron-sulfur (Fe-S) centers, to quinones in the respiratory chain. Couples the redox reaction to proton translocation (for every two electrons transferred, four hydrogen ions are translocated across the cytoplasmic membrane), and thus conserves the redox energy in a proton gradient. This is NADH-quinone oxidoreductase subunit B from Aromatoleum aromaticum (strain DSM 19018 / LMG 30748 / EbN1) (Azoarcus sp. (strain EbN1)).